Consider the following 663-residue polypeptide: Polyunsaturated fatty acid lipoxygenase ALOX12 (663 aa).

Residues 2–114 form the PLAT domain; the sequence is GRYRVRVVTG…ILSLPEGTAR (113 aa). One can recognise a Lipoxygenase domain in the interval 115-663; the sequence is LAGDNALDVF…PSRIENSITI (549 aa). Phosphoserine is present on S246. Fe cation contacts are provided by H360, H365, H540, N544, and I663.

It belongs to the lipoxygenase family. Fe cation serves as cofactor. Found primarily in platelets and in microsomal and cytosolic fractions of the epidermis (at protein level).

It localises to the cytoplasm. The protein resides in the cytosol. The protein localises to the membrane. It carries out the reaction (5Z,8Z,11Z,14Z)-eicosatetraenoate + O2 = (12S)-hydroperoxy-(5Z,8Z,10E,14Z)-eicosatetraenoate. The catalysed reaction is (9Z,12Z)-octadecadienoate + O2 = (13S)-hydroperoxy-(9Z,11E)-octadecadienoate. The enzyme catalyses 2 leukotriene A4 + O2 + 2 H2O = 2 lipoxin A4. It catalyses the reaction 2 leukotriene A4 + O2 + 2 H2O = 2 lipoxin B4. It carries out the reaction (5Z,8Z,11Z)-eicosatrienoate + O2 = (12S)-hydroperoxy-(5Z,8Z,10E)-eicosatrienoate. The catalysed reaction is (8Z,11Z,14Z)-eicosatrienoate + O2 = (12S)-hydroperoxy-(8Z,10E,14Z)-eicosatrienoate. The enzyme catalyses (4Z,7Z,10Z,13Z,16Z,19Z)-docosahexaenoate + O2 = (14S)-hydroperoxy-(4Z,7Z,10Z,12E,16Z,19Z)-docosahexaenoate. It catalyses the reaction (7S)-hydroperoxy-(4Z,8E,10Z,13Z,16Z,19Z)-docosahexaenoate + O2 = (7S,14S)-dihydroperoxy-(4Z,8E,10Z,12E,16Z,19Z)-docosahexaenoate. It carries out the reaction (7S)-hydroperoxy-(4Z,8E,10Z,13Z,16Z,19Z)-docosahexaenoate + O2 = (7S,17S)-dihydroperoxy-(4Z,8E,10Z,13Z,15E,19Z)-docosahexaenoate. The catalysed reaction is (14R,15S)-epoxy-(5Z,8Z,11Z)-eicosatrienoate + O2 = (12S)-hydroperoxy-(14R,15S)-epoxy-(5Z,8Z,10E)-eicosatrienoate. The enzyme catalyses (14S,15R)-epoxy-(5Z,8Z,11Z)-eicosatrienoate + O2 = (12S)-hydroperoxy-(14S,15R)-epoxy-(5Z,8Z,10E)-eicosatrienoate. It catalyses the reaction (5Z,8Z,11Z,14Z)-eicosatetraenoate + O2 = (15S)-hydroperoxy-(5Z,8Z,11Z,13E)-eicosatetraenoate. It carries out the reaction (14S)-hydroperoxy-(4Z,7Z,10Z,12E,16Z,19Z)-docosahexaenoate = (13S,14S)-epoxy-(4Z,7Z,9E,11E,16Z,19Z)-docosahexaenoate + H2O. The catalysed reaction is N-(5Z,8Z,11Z,14Z)-eicosatetraenoyl-L-alanine + O2 = N-(15S)-hydroperoxy-(5Z,8Z,11Z,13E)-eicosatetraenoyl-alanine. The enzyme catalyses N-(5Z,8Z,11Z,14Z)-eicosatetraenoyl-L-alanine + O2 = N-(12S)-hydroperoxy-(5Z,8Z,10E,14Z)-eicosatetraenoyl-alanine. It catalyses the reaction N-(5Z,8Z,11Z,14Z)-eicosatetraenoyl-gamma-aminobutanoate + O2 = N-(15S)-hydroperoxy-(5Z,8Z,11Z,13E)-eicosatetraenoyl-gamma-aminobutanoate. It carries out the reaction N-(5Z,8Z,11Z,14Z)-eicosatetraenoyl-gamma-aminobutanoate + O2 = N-(12S)-hydroperoxy-(5Z,8Z,10E,14Z)-eicosatetraenoyl-gamma-aminobutanoate. The catalysed reaction is N-(5Z,8Z,11Z,14Z)-eicosatetraenoyl-glycine + O2 = N-(15S)-hydroperoxy-(5Z,8Z,11Z,13E)-eicosatetraenoyl-glycine. The enzyme catalyses N-(5Z,8Z,11Z,14Z)-eicosatetraenoyl-glycine + O2 = N-(12S)-hydroperoxy-(5Z,8Z,10E,14Z)-eicosatetraenoyl-glycine. It catalyses the reaction N-(5Z,8Z,11Z,14Z)-eicosatetraenoyl-taurine + O2 = N-(12S)-hydroperoxy-(5Z,8Z,10E,14Z)-eicosatetraenoyl-taurine. It carries out the reaction N-(5Z,8Z,11Z,14Z)-eicosatetraenoyl-taurine + O2 = N-(15S)-hydroperoxy-(5Z,8Z,11Z,13E)-eicosatetraenoyl-taurine. The catalysed reaction is (5Z,8Z,11Z,14Z,17Z)-eicosapentaenoate + O2 = (12S)-hydroperoxy-(5Z,8Z,10E,14Z,17Z)-eicosapentaenoate. The protein operates within lipid metabolism; hydroperoxy eicosatetraenoic acid biosynthesis. With respect to regulation, activated by EGF. Arachidonic acid conversion is inhibited by (13S,14S)-epoxy-(4Z,7Z,9E,11E,16Z,19Z)-docosahexaenoate (13S,14S-epoxy-DHA). Arachidonate 12-lipoxygenase activity is decreased when PH decreases from 7.4 to 6. In terms of biological role, catalyzes the regio and stereo-specific incorporation of molecular oxygen into free and esterified polyunsaturated fatty acids generating lipid hydroperoxides that can be further reduced to the corresponding hydroxy species. Mainly converts arachidonate ((5Z,8Z,11Z,14Z)-eicosatetraenoate) to the specific bioactive lipid (12S)-hydroperoxyeicosatetraenoate/(12S)-HPETE. Through the production of bioactive lipids like (12S)-HPETE it regulates different biological processes including platelet activation. It can also catalyze the epoxidation of double bonds of polyunsaturated fatty acids such as (14S)-hydroperoxy-docosahexaenoate/(14S)-HPDHA resulting in the formation of (13S,14S)-epoxy-DHA. Furthermore, it may participate in the sequential oxidations of DHA ((4Z,7Z,10Z,13Z,16Z,19Z)-docosahexaenoate) to generate specialized pro-resolving mediators (SPMs) like resolvin D5 ((7S,17S)-diHPDHA) and (7S,14S)-diHPDHA, that actively down-regulate the immune response and have anti-aggregation properties with platelets. An additional function involves a multistep process by which it transforms leukotriene A4/LTA4 into the bioactive lipids lipoxin A4/LXA4 and lipoxin B4/LXB4, both are vasoactive and LXA4 may regulate neutrophil function via occupancy of specific recognition sites. Can also peroxidize linoleate ((9Z,12Z)-octadecadienoate) to (13S)-hydroperoxyoctadecadienoate/ (13S-HPODE). Due to its role in regulating both the expression of the vascular endothelial growth factor (VEGF, an angiogenic factor involved in the survival and metastasis of solid tumors) and the expression of integrin beta-1 (known to affect tumor cell migration and proliferation), it can be regarded as protumorigenic. Important for cell survival, as it may play a role not only in proliferation but also in the prevention of apoptosis in vascular smooth muscle cells. The polypeptide is Polyunsaturated fatty acid lipoxygenase ALOX12 (Alox12) (Mus musculus (Mouse)).